A 274-amino-acid chain; its full sequence is Homeobox-leucine zipper protein HAT9 (274 aa).

A compositionally biased stretch (low complexity) spans 64-74; sequence SSHSGVSSFSS. Residues 64-96 form a disordered region; that stretch reads SSHSGVSSFSSGRVVKRERDGGEESPEEEEMTE. A DNA-binding region (homeobox) is located at residues 110-169; that stretch reads SARKKLRLTKQQSALLEESFKDHSTLNPKQKQVLARQLNLRPRQVEVWFQNRRARTKLKQ. Residues 177 to 198 are leucine-zipper; sequence LKKCCETLADENIRLQKEIQEL.

This sequence belongs to the HD-ZIP homeobox family. Class II subfamily.

The protein localises to the nucleus. In terms of biological role, probable transcription factor. The sequence is that of Homeobox-leucine zipper protein HAT9 (HAT9) from Arabidopsis thaliana (Mouse-ear cress).